The sequence spans 472 residues: Adenosylhomocysteinase (472 aa).

Positions 61, 136, and 196 each coordinate substrate. NAD(+) is bound at residue 197–199; it reads TTT. Residues Lys-226 and Asp-230 each coordinate substrate. Residues Asn-231, 260–265, Glu-283, Asn-318, 339–341, and Asn-384 each bind NAD(+); these read GYGDVG and IGH.

The protein belongs to the adenosylhomocysteinase family. It depends on NAD(+) as a cofactor.

It localises to the cytoplasm. The enzyme catalyses S-adenosyl-L-homocysteine + H2O = L-homocysteine + adenosine. Its pathway is amino-acid biosynthesis; L-homocysteine biosynthesis; L-homocysteine from S-adenosyl-L-homocysteine: step 1/1. In terms of biological role, may play a key role in the regulation of the intracellular concentration of adenosylhomocysteine. This chain is Adenosylhomocysteinase, found in Cupriavidus metallidurans (strain ATCC 43123 / DSM 2839 / NBRC 102507 / CH34) (Ralstonia metallidurans).